Reading from the N-terminus, the 162-residue chain is Cyclic pyranopterin monophosphate synthase (162 aa).

Substrate-binding positions include 75–77 (LCH) and 113–114 (ME). Asp128 is an active-site residue.

It belongs to the MoaC family. In terms of assembly, homohexamer; trimer of dimers.

It catalyses the reaction (8S)-3',8-cyclo-7,8-dihydroguanosine 5'-triphosphate = cyclic pyranopterin phosphate + diphosphate. It participates in cofactor biosynthesis; molybdopterin biosynthesis. In terms of biological role, catalyzes the conversion of (8S)-3',8-cyclo-7,8-dihydroguanosine 5'-triphosphate to cyclic pyranopterin monophosphate (cPMP). In Burkholderia orbicola (strain MC0-3), this protein is Cyclic pyranopterin monophosphate synthase.